The primary structure comprises 246 residues: PF03932 family protein CutC (246 aa).

This sequence belongs to the CutC family.

Its subcellular location is the cytoplasm. This is PF03932 family protein CutC from Treponema denticola (strain ATCC 35405 / DSM 14222 / CIP 103919 / JCM 8153 / KCTC 15104).